Reading from the N-terminus, the 298-residue chain is ATP synthase gamma chain (298 aa).

This sequence belongs to the ATPase gamma chain family. As to quaternary structure, F-type ATPases have 2 components, CF(1) - the catalytic core - and CF(0) - the membrane proton channel. CF(1) has five subunits: alpha(3), beta(3), gamma(1), delta(1), epsilon(1). CF(0) has three main subunits: a, b and c.

The protein resides in the cell membrane. Functionally, produces ATP from ADP in the presence of a proton gradient across the membrane. The gamma chain is believed to be important in regulating ATPase activity and the flow of protons through the CF(0) complex. This is ATP synthase gamma chain from Parafrankia sp. (strain EAN1pec).